The following is a 435-amino-acid chain: Citrate synthase (435 aa).

Catalysis depends on residues H311 and D370.

This sequence belongs to the citrate synthase family.

The enzyme catalyses oxaloacetate + acetyl-CoA + H2O = citrate + CoA + H(+). The protein operates within carbohydrate metabolism; tricarboxylic acid cycle; isocitrate from oxaloacetate: step 1/2. The protein is Citrate synthase (gltA) of Rickettsia slovaca (strain 13-B).